A 198-amino-acid chain; its full sequence is Chromophore lyase CpcS/CpeS 2 (198 aa).

Belongs to the CpcS/CpeS biliprotein lyase family.

Its subcellular location is the plastid. It is found in the organellar chromatophore. Functionally, covalently attaches a chromophore to Cys residue(s) of phycobiliproteins. The protein is Chromophore lyase CpcS/CpeS 2 of Paulinella chromatophora.